The chain runs to 391 residues: MEKAIRNFLSQESAGGILLMAAVILAMIMANSPLSGLYQGFLHTEMQVRVGSLDIDKTLIHWINDGLMALFFMLIGLEVKRELLEGALSSREQASLPTFAAIGGMIFPAAIYLIFNYADPITQVGWAIPAATDIAFALGIMALLGSRVPVALKVFLLALAIIDDLGVVVIIAMFYSTDLSAISLVVAALAIVILVGLNRKGVTALAPYGVVGLILWIAVLKSGVHATLAGVIIAFCIPLRAKDGSSPSEHLEHSLHPWSTFVILPIFAFANAGVDLSGMSLGDLLSPVPVGIALGLLLGKPLGVLLFSFVAVKLKLAALPEGMGWRHIAPVAVMCGIGFTMSMFISSLAFIGDGEAYGDLARLGILTGSIMSAVIGYFWLSKVLPEKGEKS.

11 consecutive transmembrane segments (helical) span residues 14 to 34 (AGGI…NSPL), 59 to 79 (LIHW…GLEV), 95 to 115 (SLPT…YLIF), 124 to 144 (VGWA…MALL), 154 to 174 (VFLL…IAMF), 177 to 197 (TDLS…LVGL), 213 to 233 (LILW…GVII), 261 to 281 (FVIL…GMSL), 292 to 312 (IALG…FVAV), 331 to 351 (VAVM…LAFI), and 363 to 383 (LGIL…LSKV).

The protein belongs to the NhaA Na(+)/H(+) (TC 2.A.33) antiporter family.

It is found in the cell inner membrane. It catalyses the reaction Na(+)(in) + 2 H(+)(out) = Na(+)(out) + 2 H(+)(in). Its function is as follows. Na(+)/H(+) antiporter that extrudes sodium in exchange for external protons. This chain is Na(+)/H(+) antiporter NhaA, found in Shewanella loihica (strain ATCC BAA-1088 / PV-4).